The following is a 30-amino-acid chain: Snaclec carinactivase-1 regulatory subunit 14 kDa chain (30 aa).

Residues 1–30 enclose the C-type lectin domain; sequence DCLPDWFHYEGHCYRVFDEPKKWADAEKFC. A disulfide bond links C2 and C13.

This sequence belongs to the snaclec family. Heterodimer of a metalloproteinase subunit and a regulatory subunit comprising two polypeptides disulfide-linked (14 kDa and 17 kDa chains). In terms of tissue distribution, expressed by the venom gland.

It localises to the secreted. Calcium-dependent prothrombin activator. This protein may activate prothrombin via recognition by the regulatory subunit of the calcium ion bound conformation of its gamma-carboxyglutamic acid (GLA) domain, and the subsequent conversion of prothrombin to active thrombin is catalyzed by the catalytic subunit. This is Snaclec carinactivase-1 regulatory subunit 14 kDa chain from Echis carinatus (Saw-scaled viper).